A 743-amino-acid polypeptide reads, in one-letter code: Apo-petrobactin exporter (743 aa).

12 helical membrane passes run 20 to 40, 199 to 219, 223 to 243, 258 to 278, 303 to 323, 337 to 357, 406 to 426, 561 to 581, 584 to 604, 613 to 633, 672 to 692, and 694 to 714; these read WITL…LPQV, ADVK…ILLY, ILAI…SPTL, AISI…LFLI, GGAI…LLLA, VAVF…LLIF, WTII…VPRI, DEAV…LVYL, IVAM…ALGA, MGAP…LVAL, AGLI…QVLV, and FGIV…PLLV.

Belongs to the resistance-nodulation-cell division (RND) (TC 2.A.6) family. MmpL subfamily.

Its subcellular location is the cell membrane. Its function is as follows. Exports the siderophore petrobactin. This chain is Apo-petrobactin exporter, found in Bacillus anthracis.